A 74-amino-acid polypeptide reads, in one-letter code: Amphipathic peptide CT1 (74 aa).

The first 23 residues, 1 to 23, serve as a signal peptide directing secretion; the sequence is MKTQIVILFISMIMLQMFVQIEG. The residue at position 37 (Val37) is a Valine amide. A propeptide spanning residues 41-74 is cleaved from the precursor; that stretch reads GLRNLDDLDDLDLDHLFDSDVSDADLRLLKQMFR.

This sequence belongs to the non-disulfide-bridged peptide (NDBP) superfamily. Short antimicrobial peptide (group 4) family. Expressed by the venom gland.

Its subcellular location is the secreted. The protein localises to the target cell membrane. Antimicrobial peptide that is rapidly bactericidal against Gram-positive bacteria (MIC=12.5 ug/ml against S.aureus, and MIC=100 ug/ml against M.luteus). Is also active against clinical antibiotics-resistant bacterial strains. The sequence is that of Amphipathic peptide CT1 from Scorpiops tibetanus (Scorpion).